We begin with the raw amino-acid sequence, 481 residues long: Small ribosomal subunit protein bS1 (481 aa).

4 consecutive S1 motif domains span residues G36–K105, D123–R188, G209–K277, and G294–K363. The segment at A437–A465 is disordered. Over residues S445–A457 the composition is skewed to polar residues.

The protein belongs to the bacterial ribosomal protein bS1 family.

Functionally, binds mRNA; thus facilitating recognition of the initiation point. It is needed to translate mRNA with a short Shine-Dalgarno (SD) purine-rich sequence. In Mycobacterium leprae (strain TN), this protein is Small ribosomal subunit protein bS1 (rpsA).